Here is a 796-residue protein sequence, read N- to C-terminus: Vacuolar protein sorting-associated protein 35 (796 aa).

Phosphoserine is present on Ser7. Interaction with SNX3 stretches follow at residues 25 to 44 and 205 to 215; these read VQSF…DALK and DREKRERERQE. The segment at 438–796 is interaction with SLC11A2; sequence CYVLSNVLDY…EGPIYEGLIL (359 aa). The interval 500-693 is interaction with IGF2R cytoplasmic domain; that stretch reads SDDPDQQYLI…DKNGEELHGG (194 aa). The segment at 776–796 is disordered; the sequence is HLRSRRESPESEGPIYEGLIL. Residue Ser783 is modified to Phosphoserine. Phosphotyrosine is present on Tyr791.

The protein belongs to the VPS35 family. As to quaternary structure, component of the heterotrimeric retromer cargo-selective complex (CSC), also described as vacuolar protein sorting subcomplex (VPS) formed by VPS26 (VPS26A or VPS26B), VPS29 and VPS35. The CSC has a highly elongated structure with VPS26 and VPS29 binding independently at opposite distal ends of VPS35 as central platform. The CSC is believed to associate with variable sorting nexins to form functionally distinct retromer complex variants. The originally described retromer complex (also called SNX-BAR retromer) is a pentamer containing the CSC and a heterodimeric membrane-deforming subcomplex formed between SNX1 or SNX2 and SNX5 or SNX6 (also called SNX-BAR subcomplex); the affinity between the respective CSC and SNX-BAR subcomplexes is low. The CSC associates with SNX3 to form a SNX3-retromer complex. The CSC associates with SNX27, the WASH complex and the SNX-BAR subcomplex to form the SNX27-retromer complex. Interacts with VPS26A, VPS29, VPS26B and LRRK2. Interacts with SNX1, SNX2, IGF2R, SNX3, GOLPH3, SLC11A2, WASHC2, FKBP15, WASHC1, EHD1. Interacts with MAGEL2; leading to recruitment of the TRIM27:MAGEL2 E3 ubiquitin ligase complex retromer-containing endosomes. Interacts with SORCS2. Detected in striatum (at protein level). Ubiquitous. Highly expressed in fat tissue, testis, brain, kidney, thymus, liver and pancreas, and at lower levels in heart, intestine and skeletal muscle. Detected in oocytes, pre-implantation embryos and at 6.5-12.5 dpc.

It is found in the cytoplasm. The protein localises to the membrane. The protein resides in the endosome. It localises to the early endosome. Its subcellular location is the late endosome. Its function is as follows. Acts as a component of the retromer cargo-selective complex (CSC). The CSC is believed to be the core functional component of retromer or respective retromer complex variants acting to prevent missorting of selected transmembrane cargo proteins into the lysosomal degradation pathway. The recruitment of the CSC to the endosomal membrane involves RAB7A and SNX3. The CSC seems to associate with the cytoplasmic domain of cargo proteins predominantly via VPS35; however, these interactions seem to be of low affinity and retromer SNX proteins may also contribute to cargo selectivity thus questioning the classical function of the CSC. The SNX-BAR retromer mediates retrograde transport of cargo proteins from endosomes to the trans-Golgi network (TGN) and is involved in endosome-to-plasma membrane transport for cargo protein recycling. The SNX3-retromer mediates the retrograde transport of WLS distinct from the SNX-BAR retromer pathway. The SNX27-retromer is believed to be involved in endosome-to-plasma membrane trafficking and recycling of a broad spectrum of cargo proteins. The CSC seems to act as recruitment hub for other proteins, such as the WASH complex and TBC1D5. Required for retrograde transport of lysosomal enzyme receptor IGF2R and SLC11A2. Required to regulate transcytosis of the polymeric immunoglobulin receptor (pIgR-pIgA). Required for endosomal localization of WASHC2 and mediates the association of the CSC with the WASH complex. The chain is Vacuolar protein sorting-associated protein 35 (Vps35) from Mus musculus (Mouse).